Here is an 882-residue protein sequence, read N- to C-terminus: Homeobox-leucine zipper protein ROC3 (882 aa).

Residues 104 to 144 form a disordered region; the sequence is DVDDDHKPQHSGHDQPPDAAQPSGAAGGNAKKKRYHRHTAH. Over residues 107–119 the composition is skewed to basic and acidic residues; that stretch reads DDHKPQHSGHDQP. Residues 133–143 show a composition bias toward basic residues; sequence AKKKRYHRHTA. Residues 134 to 193 constitute a DNA-binding region (homeobox); that stretch reads KKKRYHRHTAHQIQQMEALFKECPHPDDKQRLKLSQELGLKPRQVKFWFQNRRTQMKAQQ. Residues 200 to 263 adopt a coiled-coil conformation; the sequence is ILRAENENLK…LDRLACIATR (64 aa). An START domain is found at 340–584; that stretch reads QEQDKQLVVD…LQRQCERLAS (245 aa). Residues 782 to 816 are compositionally biased toward low complexity; it reads AAAPTISSSTTTTTGNGNGETSSTPPRNSSSNNNN. A disordered region spans residues 782-820; it reads AAAPTISSSTTTTTGNGNGETSSTPPRNSSSNNNNADEL.

The protein belongs to the HD-ZIP homeobox family. Class IV subfamily.

The protein localises to the nucleus. Functionally, probable transcription factor. The protein is Homeobox-leucine zipper protein ROC3 (ROC3) of Oryza sativa subsp. indica (Rice).